The chain runs to 657 residues: uncharacterized protein (657 aa).

A signal peptide spans 1 to 26; the sequence is MFGKGLVKKSLLFFSGVSTMAVFLVS. A lipid anchor (N-palmitoyl cysteine) is attached at Cys-27. A lipid anchor (S-diacylglycerol cysteine) is attached at Cys-27. Disordered stretches follow at residues 291–316, 468–496, and 516–563; these read ISPK…FSST, RLSS…DGII, and KSMT…KETN. Positions 294–304 are enriched in polar residues; sequence KQGSDNNSNLS. The span at 469–495 shows a compositional bias: basic and acidic residues; it reads LSSDDTNTKKALKEVSTHKNGSDKDGI. Polar residues predominate over residues 516–525; the sequence is KSMTDNNSGT. Residues 526–545 are compositionally biased toward basic and acidic residues; that stretch reads EQKKNLSEVDTKKKEKESKG. The segment covering 546–559 has biased composition (low complexity); that stretch reads KTQSNGQDSGQQNG.

To T.pallidum TmpC.

The protein localises to the cell membrane. This is an uncharacterized protein from Mycoplasma pneumoniae (strain ATCC 29342 / M129 / Subtype 1) (Mycoplasmoides pneumoniae).